The primary structure comprises 475 residues: ATP synthase subunit beta (475 aa).

An ATP-binding site is contributed by 152 to 159 (GGAGVGKT).

The protein belongs to the ATPase alpha/beta chains family. As to quaternary structure, F-type ATPases have 2 components, CF(1) - the catalytic core - and CF(0) - the membrane proton channel. CF(1) has five subunits: alpha(3), beta(3), gamma(1), delta(1), epsilon(1). CF(0) has three main subunits: a(1), b(2) and c(9-12). The alpha and beta chains form an alternating ring which encloses part of the gamma chain. CF(1) is attached to CF(0) by a central stalk formed by the gamma and epsilon chains, while a peripheral stalk is formed by the delta and b chains.

The protein localises to the cell inner membrane. The enzyme catalyses ATP + H2O + 4 H(+)(in) = ADP + phosphate + 5 H(+)(out). In terms of biological role, produces ATP from ADP in the presence of a proton gradient across the membrane. The catalytic sites are hosted primarily by the beta subunits. This chain is ATP synthase subunit beta, found in Wolbachia sp. subsp. Drosophila simulans (strain wRi).